Reading from the N-terminus, the 727-residue chain is Adhesion G protein-coupled receptor L4 (727 aa).

Positions 1–19 (MKLLLFAAWFSSLLDPCRF) are cleaved as a signal peptide. At 20–467 (LDICQSCHPN…LAHYNVLTRI (448 aa)) the chain is on the extracellular side. Residues 52 to 90 (DDNECETVPEICGLHANCTNYVGGYYCNCLSGFISNGTE) enclose the EGF-like 1; calcium-binding domain. Cystine bridges form between C56–C69, C63–C78, C106–C118, C112–C127, C408–C438, and C426–C440. An EGF-like 2; calcium-binding domain is found at 102–139 (DINECEEDRKCGPNSKCHNNIGSFICSCLRGYTSPAGP). The 175-residue stretch at 282 to 456 (TQMQVHAGDV…AILMSSARAN (175 aa)) folds into the GAIN-B domain. The tract at residues 408 to 456 (CAFWEYSPSMMGHWSLDGCIRTRVNTTHTSCSCNHLTHFAILMSSARAN) is GPS. A helical membrane pass occupies residues 468–488 (TQLGMVISLICLSMCIFTFWF). Residues 489-496 (FRDIQNTR) are Cytoplasmic-facing. The helical transmembrane segment at 497–517 (TTIHKNLCCSLFMAQFIFLIG) threads the bilayer. Over 518–535 (INKSAHKWFCSLIAGLLH) the chain is Extracellular. Residues 536 to 556 (YFFLAAFAWMCIEGIHLYLIV) traverse the membrane as a helical segment. Over 557–568 (VGVIYNKGFLHR) the chain is Cytoplasmic. The helical transmembrane segment at 569 to 589 (NFYAFGYGSPAVVVAISATLG) threads the bilayer. Residues 590–609 (YKYYGTSSVCWLSTENNFIW) are Extracellular-facing. The helical transmembrane segment at 610–630 (SFIGPAILIILVNLLAFAVII) threads the bilayer. The Cytoplasmic portion of the chain corresponds to 631–654 (YKVYRHTAVKKPEISHYENIRSCA). Residues 655 to 675 (RGAIALLFVLGVTWAFGVMYI) form a helical membrane-spanning segment. The Extracellular portion of the chain corresponds to 676–682 (LYETTLT). The helical transmembrane segment at 683–703 (AYLFTFANVFQGMFIFIFLCV) threads the bilayer.

This sequence belongs to the G-protein coupled receptor 2 family. Adhesion G-protein coupled receptor (ADGR) subfamily. As to quaternary structure, heterodimer of 2 chains generated by proteolytic processing; the large extracellular N-terminal fragment and the membrane-bound C-terminal fragment predominantly remain associated and non-covalently linked. Post-translationally, autoproteolytically processed at the GPS region of the GAIN-B domain; this cleavage modulates receptor activity.

It localises to the cell membrane. Its function is as follows. Orphan receptor that plays a role in vessel formation. In Danio rerio (Zebrafish), this protein is Adhesion G protein-coupled receptor L4.